Consider the following 486-residue polypeptide: UDP-N-acetylmuramoyl-L-alanyl-D-glutamate--2,6-diaminopimelate ligase (486 aa).

Ser33 contacts UDP-N-acetyl-alpha-D-muramoyl-L-alanyl-D-glutamate. 110-116 (GTNGKTS) contributes to the ATP binding site. UDP-N-acetyl-alpha-D-muramoyl-L-alanyl-D-glutamate-binding positions include 152–153 (TT), Ser179, Gln185, and Arg187. Lys219 is modified (N6-carboxylysine). Residues Arg383, 407–410 (DNPR), Gly455, and Glu459 each bind meso-2,6-diaminopimelate. Residues 407–410 (DNPR) carry the Meso-diaminopimelate recognition motif motif.

The protein belongs to the MurCDEF family. MurE subfamily. Mg(2+) is required as a cofactor. Post-translationally, carboxylation is probably crucial for Mg(2+) binding and, consequently, for the gamma-phosphate positioning of ATP.

It is found in the cytoplasm. It carries out the reaction UDP-N-acetyl-alpha-D-muramoyl-L-alanyl-D-glutamate + meso-2,6-diaminopimelate + ATP = UDP-N-acetyl-alpha-D-muramoyl-L-alanyl-gamma-D-glutamyl-meso-2,6-diaminopimelate + ADP + phosphate + H(+). The protein operates within cell wall biogenesis; peptidoglycan biosynthesis. Catalyzes the addition of meso-diaminopimelic acid to the nucleotide precursor UDP-N-acetylmuramoyl-L-alanyl-D-glutamate (UMAG) in the biosynthesis of bacterial cell-wall peptidoglycan. The polypeptide is UDP-N-acetylmuramoyl-L-alanyl-D-glutamate--2,6-diaminopimelate ligase (Zymomonas mobilis subsp. mobilis (strain ATCC 31821 / ZM4 / CP4)).